A 61-amino-acid polypeptide reads, in one-letter code: Probable tautomerase SMU_1087 (61 aa).

Pro-2 functions as the Proton acceptor; via imino nitrogen in the catalytic mechanism.

Belongs to the 4-oxalocrotonate tautomerase family.

The sequence is that of Probable tautomerase SMU_1087 from Streptococcus mutans serotype c (strain ATCC 700610 / UA159).